The chain runs to 311 residues: tRNA dimethylallyltransferase (311 aa).

ATP is bound at residue 13–20; that stretch reads GPTASGKT. 15 to 20 contacts substrate; sequence TASGKT. 2 interaction with substrate tRNA regions span residues 38 to 41 and 166 to 170; these read DSMQ and QRVLR.

This sequence belongs to the IPP transferase family. As to quaternary structure, monomer. Mg(2+) is required as a cofactor.

It catalyses the reaction adenosine(37) in tRNA + dimethylallyl diphosphate = N(6)-dimethylallyladenosine(37) in tRNA + diphosphate. Functionally, catalyzes the transfer of a dimethylallyl group onto the adenine at position 37 in tRNAs that read codons beginning with uridine, leading to the formation of N6-(dimethylallyl)adenosine (i(6)A). This Staphylococcus aureus (strain MRSA252) protein is tRNA dimethylallyltransferase.